A 452-amino-acid polypeptide reads, in one-letter code: Probable V-type proton ATPase subunit H (452 aa).

It belongs to the V-ATPase H subunit family. As to quaternary structure, V-ATPase is a heteromultimeric enzyme composed of a peripheral catalytic V1 complex (components A to H) attached to an integral membrane V0 proton pore complex (components: a, c, c', c'' and d).

Subunit of the peripheral V1 complex of vacuolar ATPase. Subunit H activates the ATPase activity of the enzyme and couples ATPase activity to proton flow. Vacuolar ATPase is responsible for acidifying a variety of intracellular compartments in eukaryotic cells, thus providing most of the energy required for transport processes in the vacuolar system. This is Probable V-type proton ATPase subunit H from Oryza sativa subsp. japonica (Rice).